Here is a 185-residue protein sequence, read N- to C-terminus: Elongation factor P (185 aa).

It belongs to the elongation factor P family.

Its subcellular location is the cytoplasm. The protein operates within protein biosynthesis; polypeptide chain elongation. Involved in peptide bond synthesis. Stimulates efficient translation and peptide-bond synthesis on native or reconstituted 70S ribosomes in vitro. Probably functions indirectly by altering the affinity of the ribosome for aminoacyl-tRNA, thus increasing their reactivity as acceptors for peptidyl transferase. The polypeptide is Elongation factor P (Limosilactobacillus fermentum (strain NBRC 3956 / LMG 18251) (Lactobacillus fermentum)).